The following is a 98-amino-acid chain: DNA-binding protein Fis (98 aa).

The segment at residues 74–93 (QTRAALMMGINRGTLRKKLK) is a DNA-binding region (H-T-H motif).

It belongs to the transcriptional regulatory Fis family. Homodimer.

Functionally, activates ribosomal RNA transcription. Plays a direct role in upstream activation of rRNA promoters. The chain is DNA-binding protein Fis from Enterobacter sp. (strain 638).